The following is a 690-amino-acid chain: Translation factor GUF1, mitochondrial (690 aa).

Residues 40 to 68 (SVTVPAARRHNSTKSTNSTTSTNSTTATS) form a disordered region. A compositionally biased stretch (low complexity) spans 52 to 68 (TKSTNSTTSTNSTTATS). One can recognise a tr-type G domain in the interval 89–272 (ERYRNFCIVA…AVIKKMPAPV (184 aa)). Residues 98 to 105 (AHIDHGKS), 165 to 169 (DTPGH), and 219 to 222 (NKID) each bind GTP.

It belongs to the TRAFAC class translation factor GTPase superfamily. Classic translation factor GTPase family. LepA subfamily.

The protein resides in the mitochondrion inner membrane. It catalyses the reaction GTP + H2O = GDP + phosphate + H(+). In terms of biological role, promotes mitochondrial protein synthesis. May act as a fidelity factor of the translation reaction, by catalyzing a one-codon backward translocation of tRNAs on improperly translocated ribosomes. Binds to mitochondrial ribosomes in a GTP-dependent manner. The protein is Translation factor GUF1, mitochondrial of Sordaria macrospora (strain ATCC MYA-333 / DSM 997 / K(L3346) / K-hell).